Here is a 206-residue protein sequence, read N- to C-terminus: Protein VEL1 (206 aa).

Residues 1-19 (MSFLSIFTFFSVLISVATT) form the signal peptide. Asn26, Asn48, Asn91, Asn139, and Asn152 each carry an N-linked (GlcNAc...) asparagine glycan.

The protein belongs to the VEL1 family. Post-translationally, N-glycosylated.

The protein localises to the cytoplasm. Its subcellular location is the cytosol. This chain is Protein VEL1 (VEL1), found in Saccharomyces cerevisiae (strain ATCC 204508 / S288c) (Baker's yeast).